A 388-amino-acid polypeptide reads, in one-letter code: Lipid-A-disaccharide synthase (388 aa).

Belongs to the LpxB family.

The enzyme catalyses a lipid X + a UDP-2-N,3-O-bis[(3R)-3-hydroxyacyl]-alpha-D-glucosamine = a lipid A disaccharide + UDP + H(+). The protein operates within bacterial outer membrane biogenesis; LPS lipid A biosynthesis. Its function is as follows. Condensation of UDP-2,3-diacylglucosamine and 2,3-diacylglucosamine-1-phosphate to form lipid A disaccharide, a precursor of lipid A, a phosphorylated glycolipid that anchors the lipopolysaccharide to the outer membrane of the cell. This is Lipid-A-disaccharide synthase from Burkholderia pseudomallei (strain K96243).